A 228-amino-acid polypeptide reads, in one-letter code: Upstream activation factor subunit UAF30 (228 aa).

The region spanning 1 to 56 is the DEK-C domain; it reads MAELNDYSTMIDILLSDMDLETVTTKKVRMALKEVYAIDVESQGKAINKLIRKHLD. A compositionally biased stretch (basic and acidic residues) spans 89-111; that stretch reads SKRSSGEEKNDSETKGTHVEKKK. A disordered region spans residues 89 to 118; it reads SKRSSGEEKNDSETKGTHVEKKKGTVSKSP. The SWIB/MDM2 domain maps to 119–195; that stretch reads ISTRKVTLSK…HKILASHMTE (77 aa). Positions 209–228 are disordered; the sequence is VRRKEKPIVSDSEQSDTKGI. Phosphoserine occurs at positions 218, 220, and 223.

In terms of assembly, component of the UAF (upstream activation factor) complex which consists of UAF30, RRN5, RRN9, RRN10, and histones H3 and H4.

The protein resides in the nucleus. The protein localises to the nucleolus. Its function is as follows. Nonessential component of the UAF (upstream activation factor) complex which interacts with the upstream element of the RNA polymerase I promoter and forms a stable preinitiation complex. Together with SPT15/TBP UAF seems to stimulate basal transcription to a fully activated level. UAF30 seems to play a role in silencing transcription by RNA polymerase II. The sequence is that of Upstream activation factor subunit UAF30 (UAF30) from Saccharomyces cerevisiae (strain ATCC 204508 / S288c) (Baker's yeast).